The primary structure comprises 505 residues: 2,3-bisphosphoglycerate-independent phosphoglycerate mutase (505 aa).

Mn(2+)-binding residues include aspartate 13 and serine 63. The active-site Phosphoserine intermediate is serine 63. Substrate-binding positions include histidine 124, 153–154 (RD), arginine 183, arginine 189, 254–257 (RADR), and lysine 329. Positions 395, 399, 436, 437, and 455 each coordinate Mn(2+).

Belongs to the BPG-independent phosphoglycerate mutase family. As to quaternary structure, monomer. It depends on Mn(2+) as a cofactor.

It carries out the reaction (2R)-2-phosphoglycerate = (2R)-3-phosphoglycerate. It functions in the pathway carbohydrate degradation; glycolysis; pyruvate from D-glyceraldehyde 3-phosphate: step 3/5. Catalyzes the interconversion of 2-phosphoglycerate and 3-phosphoglycerate. In Agrobacterium fabrum (strain C58 / ATCC 33970) (Agrobacterium tumefaciens (strain C58)), this protein is 2,3-bisphosphoglycerate-independent phosphoglycerate mutase.